Consider the following 84-residue polypeptide: MKTLLLILVVVTIVCLDLVCCSRTCCNQQSSQPKTTTVCPDGEKSCYKKSWRDHRGTRSERGCGCPTVKPGVNRECCDTDECNN.

Positions 1–21 are cleaved as a signal peptide; it reads MKTLLLILVVVTIVCLDLVCC. Disulfide bonds link cysteine 25–cysteine 46, cysteine 39–cysteine 63, cysteine 65–cysteine 76, and cysteine 77–cysteine 82.

This sequence belongs to the three-finger toxin family. Short-chain subfamily. Type I alpha-neurotoxin sub-subfamily. As to expression, expressed by the venom gland.

The protein resides in the secreted. Its function is as follows. Binds to muscle nicotinic acetylcholine receptor (nAChR) and inhibit acetylcholine from binding to the receptor, thereby impairing neuromuscular transmission. This chain is Short neurotoxin SNTX-1, found in Demansia vestigiata (Lesser black whip snake).